The primary structure comprises 764 residues: Palmitoyltransferase AKR1 (764 aa).

Disordered stretches follow at residues 1 to 38 (MVNELENVPRASTLTNEEQTVDPSNNDSQEDISLGDSN) and 51 to 71 (SGNEEESGNEQVNHNDEAEED). Residues 1–321 (MVNELENVPR…IKKWFKKSQH (321 aa)) lie on the Cytoplasmic side of the membrane. Residues 10–27 (RASTLTNEEQTVDPSNND) show a composition bias toward polar residues. Phosphoserine occurs at positions 51 and 57. ANK repeat units follow at residues 72–102 (PLLTRYHTACQRGDLATVKEMIHGKLLEVNN), 108–137 (EHITGLHWASINNRLSVVDFLVSQGADVNA), 142–171 (LHATPLHWAARYGYVYIVDFLLKHGADPTM), 175–204 (QGFNLLHLSVNSSNIMLVLYVLFNVVSKGL), 213–242 (KGRTSLLWAAYQGDSLTVAELLKFGASIKI), and 246–275 (EGFTPLHWGTVKGQPHVLKYLIQDGADFFQ). Residues 322–341 (AKLVTFITPFLFLGIAFALF) form a helical membrane-spanning segment. The Lumenal segment spans residues 342 to 346 (SHINP). Residues 347-364 (LFVIIVLFLLAIATNKGL) traverse the membrane as a helical segment. The Cytoplasmic segment spans residues 365–384 (NKFVLPSYGRMGVHNVTLLR). A helical membrane pass occupies residues 385-405 (SPLLSGVFFGTLLWVTIVWFF). Topologically, residues 406 to 418 (KVMPRTFSDEQYT) are lumenal. A helical transmembrane segment spans residues 419-439 (NILMLVILVSVFYLFGQLVIM). Over 440–513 (DPGCLPEETD…FNDVGLKNHK (74 aa)) the chain is Cytoplasmic. The region spanning 470–520 (NFCIETWIRKPLRSKFSPLNNAVVARFDHYCPWIFNDVGLKNHKAFIFFIT) is the DHHC domain. Residue C500 is the S-palmitoyl cysteine intermediate of the active site. A helical membrane pass occupies residues 514-534 (AFIFFITLMESGIFTFLALCL). Topologically, residues 535–570 (EYFDELEDAHEDTSQKNGKCFILGASDLCSGLIYDR) are lumenal. A helical membrane pass occupies residues 571 to 591 (FVFLILLWALLQSIWVASLIF). Over 592–764 (VQAFQICKGM…KDVEQGNDMV (173 aa)) the chain is Cytoplasmic.

The protein belongs to the DHHC palmitoyltransferase family. AKR/ZDHHC17 subfamily.

It localises to the early endosome membrane. The protein localises to the golgi apparatus membrane. It carries out the reaction L-cysteinyl-[protein] + hexadecanoyl-CoA = S-hexadecanoyl-L-cysteinyl-[protein] + CoA. Functionally, palmitoyltransferase specific for casein kinase 1. Palmitoylates isoforms YCK1 and YCK2 at both C-terminal cysteine residues, which is required for their proper plasma membrane localization. Required for constitutive endocytosis of a-factor receptor STE3 and both constitutive and pheromone-induced endocytosis of alpha-factor receptor STE2. This is Palmitoyltransferase AKR1 (AKR1) from Saccharomyces cerevisiae (strain ATCC 204508 / S288c) (Baker's yeast).